The following is a 167-amino-acid chain: Ubiquitin-conjugating enzyme E2 15 (167 aa).

Positions 5–165 (ASEQLLRKQL…VRRLVRRSIE (161 aa)) constitute a UBC core domain. C90 acts as the Glycyl thioester intermediate in catalysis.

Belongs to the ubiquitin-conjugating enzyme family.

The enzyme catalyses S-ubiquitinyl-[E1 ubiquitin-activating enzyme]-L-cysteine + [E2 ubiquitin-conjugating enzyme]-L-cysteine = [E1 ubiquitin-activating enzyme]-L-cysteine + S-ubiquitinyl-[E2 ubiquitin-conjugating enzyme]-L-cysteine.. Its pathway is protein modification; protein ubiquitination. Catalyzes the covalent attachment of ubiquitin to other proteins. Has a role in the formation of chromatin structures that influence the localization of transcriptional silencing factors. In Schizosaccharomyces pombe (strain 972 / ATCC 24843) (Fission yeast), this protein is Ubiquitin-conjugating enzyme E2 15 (ubc15).